A 267-amino-acid polypeptide reads, in one-letter code: Outer membrane protein assembly factor BamD (267 aa).

The N-terminal stretch at 1 to 16 (MKKILLTVSLGLALSA) is a signal peptide. The N-palmitoyl cysteine moiety is linked to residue C17. C17 carries the S-diacylglycerol cysteine lipid modification.

It belongs to the BamD family. In terms of assembly, part of the Bam complex.

The protein resides in the cell outer membrane. Functionally, part of the outer membrane protein assembly complex, which is involved in assembly and insertion of beta-barrel proteins into the outer membrane. Required for efficient transformation of Neisseria meningitidis by species-related DNA. In Neisseria meningitidis serogroup B (strain ATCC BAA-335 / MC58), this protein is Outer membrane protein assembly factor BamD.